Consider the following 330-residue polypeptide: Aspartate--ammonia ligase (330 aa).

The protein belongs to the class-II aminoacyl-tRNA synthetase family. AsnA subfamily.

The protein resides in the cytoplasm. It catalyses the reaction L-aspartate + NH4(+) + ATP = L-asparagine + AMP + diphosphate + H(+). It participates in amino-acid biosynthesis; L-asparagine biosynthesis; L-asparagine from L-aspartate (ammonia route): step 1/1. This chain is Aspartate--ammonia ligase, found in Escherichia coli O7:K1 (strain IAI39 / ExPEC).